The chain runs to 337 residues: Cytoskeleton protein RodZ (337 aa).

Topologically, residues 1–111 (MNTEATHDQN…LGKRRKKRDG (111 aa)) are cytoplasmic. One can recognise an HTH cro/C1-type domain in the interval 19–71 (LRNAREQLGLSQQAVAERLCLKVSTVRDIEEDKAPADLASTFLRGYIRSYARL). The H-T-H motif DNA-binding region spans 30-49 (QQAVAERLCLKVSTVRDIEE). The chain crosses the membrane as a helical; Signal-anchor for type II membrane protein span at residues 112–132 (WLMTFTWLVLFVVIGLSGAWW). Over 133–337 (WQDHKAQQEE…TLNAEQSPAQ (205 aa)) the chain is Periplasmic. Residues 145 to 167 (TMADQSSAELSSNSEQGQSVPLN) are compositionally biased toward polar residues. A disordered region spans residues 145–220 (TMADQSSAEL…VSPSQANVDT (76 aa)). The span at 168-207 (TSTTTDPATTSTPPASVDTTATNTQTPAVTAPAPAVDPQQ) shows a compositional bias: low complexity. Polar residues predominate over residues 208-218 (NAVVSPSQANV).

Belongs to the RodZ family.

It localises to the cell inner membrane. Its function is as follows. Cytoskeletal protein that is involved in cell-shape control through regulation of the length of the long axis. The polypeptide is Cytoskeleton protein RodZ (Escherichia coli O17:K52:H18 (strain UMN026 / ExPEC)).